A 156-amino-acid chain; its full sequence is Acanthoscurrin-1 (156 aa).

An N-terminal signal peptide occupies residues 1-23; it reads MAFRMKLVVCIVLLSTLAVMSSA. Lysine amide is present on K155.

In terms of tissue distribution, expressed in hemocytes and secreted into the plasma following bacterial immune challenge.

It is found in the secreted. In terms of biological role, antimicrobial protein. Strong activity against the Gram-negative bacterium E.coli SBS363 and yeast C.albicans. No detectable activity against the Gram-positive bacterium M.luteus. The protein is Acanthoscurrin-1 of Acanthoscurria gomesiana (Tarantula spider).